Consider the following 233-residue polypeptide: NAD(P)H-hydrate epimerase (233 aa).

In terms of domain architecture, YjeF N-terminal spans 15–218 (SQQFDVELMS…KLQEKYNFIV (204 aa)). 67–71 (NNGGD) lines the (6S)-NADPHX pocket. The K(+) site is built by Asn-68 and Asp-128. Residues 132–138 (GFSFKPP), Tyr-143, and Asp-161 contribute to the (6S)-NADPHX site. Ser-164 provides a ligand contact to K(+).

The protein belongs to the NnrE/AIBP family. Requires K(+) as cofactor.

The enzyme catalyses (6R)-NADHX = (6S)-NADHX. It catalyses the reaction (6R)-NADPHX = (6S)-NADPHX. Catalyzes the epimerization of the S- and R-forms of NAD(P)HX, a damaged form of NAD(P)H that is a result of enzymatic or heat-dependent hydration. This is a prerequisite for the S-specific NAD(P)H-hydrate dehydratase to allow the repair of both epimers of NAD(P)HX. The polypeptide is NAD(P)H-hydrate epimerase (Paramecium tetraurelia).